The following is a 391-amino-acid chain: Tumor susceptibility gene 101 protein (391 aa).

Ala2 carries the post-translational modification N-acetylalanine. Residues 2-145 (AVSESQLKKM…GEEPPVFSRP (144 aa)) form the UEV domain. An interaction with CEP55 region spans residues 159 to 163 (PPNTS). Residues 195–222 (GPYPATTSSQYPSQPPVTTAGPSRDGTI) form a disordered region. Over residues 200–215 (TTSSQYPSQPPVTTAG) the composition is skewed to polar residues. Thr221 carries the post-translational modification Phosphothreonine. The stretch at 238–317 (KLRWRMKEEM…NQSENNDIDE (80 aa)) forms a coiled coil. The PTAP motif signature appears at 321–324 (PTAP). In terms of domain architecture, SB spans 323-391 (APLYKQILNL…RKTAGLSDLY (69 aa)).

The protein belongs to the ubiquitin-conjugating enzyme family. UEV subfamily. Component of the ESCRT-I complex (endosomal sorting complex required for transport I) which consists of TSG101, VPS28, a VPS37 protein (VPS37A to -D) and MVB12A or MVB12B in a 1:1:1:1 stoichiometry. Interacts with VPS37A, VPS37B and VPS37C. Interacts with DMAP1. Interacts with ubiquitin. Interacts with AATF. Interacts with stathmin and GMCL. Component of an ESCRT-I complex (endosomal sorting complex required for transport I) which consists of TSG101, VPS28, VPS37A and UBAP1 in a 1:1:1:1 stoichiometry. Interacts with HGS; the interaction mediates the association with the ESCRT-0 complex. Interacts with GGA1 and GGA3. Interacts (via UEV domain) with PDCD6IP/AIP1. Interacts with VPS28, SNF8 and VPS36. Self-associates. Interacts with MVB12A; the association appears to be mediated by the TSG101-VPS37 binary subcomplex. Interacts with VPS37D. Interacts with LRSAM1. Interacts with CEP55; the interaction is required for cytokinesis. Interacts with PDCD6. Interacts with LITAF. Interacts with MGRN1. Interacts with ARRDC1; recruits TSG101 to the plasma membrane. Post-translationally, monoubiquitinated at multiple sites by LRSAM1 and by MGRN1. Ubiquitination inactivates it, possibly by regulating its shuttling between an active membrane-bound protein and an inactive soluble form. Ubiquitination by MGRN1 requires the presence of UBE2D1.

The protein resides in the cytoplasm. Its subcellular location is the early endosome membrane. The protein localises to the late endosome membrane. It localises to the cytoskeleton. It is found in the microtubule organizing center. The protein resides in the centrosome. Its subcellular location is the midbody. The protein localises to the midbody ring. It localises to the nucleus. Component of the ESCRT-I complex, a regulator of vesicular trafficking process. Binds to ubiquitinated cargo proteins and is required for the sorting of endocytic ubiquitinated cargos into multivesicular bodies (MVBs). Mediates the association between the ESCRT-0 and ESCRT-I complex. Required for completion of cytokinesis; the function requires CEP55. May be involved in cell growth and differentiation. Acts as a negative growth regulator. Required for the exosomal release of SDCBP, CD63 and syndecan. It may also play a role in the extracellular release of microvesicles that differ from the exosomes. The chain is Tumor susceptibility gene 101 protein (Tsg101) from Rattus norvegicus (Rat).